A 163-amino-acid chain; its full sequence is Mediator of RNA polymerase II transcription subunit 10 (163 aa).

The tract at residues 57-79 (AAPDPSYVQSPPSRTGLSPADPP) is disordered. Positions 63–72 (YVQSPPSRTG) are enriched in polar residues.

This sequence belongs to the Mediator complex subunit 10 family. In terms of assembly, component of the Mediator complex.

It localises to the nucleus. Functionally, component of the Mediator complex, a coactivator involved in the regulated transcription of nearly all RNA polymerase II-dependent genes. Mediator functions as a bridge to convey information from gene-specific regulatory proteins to the basal RNA polymerase II transcription machinery. Mediator is recruited to promoters by direct interactions with regulatory proteins and serves as a scaffold for the assembly of a functional preinitiation complex with RNA polymerase II and the general transcription factors. The polypeptide is Mediator of RNA polymerase II transcription subunit 10 (NUT2) (Coccidioides immitis (strain RS) (Valley fever fungus)).